We begin with the raw amino-acid sequence, 689 residues long: Glycine--tRNA ligase beta subunit (689 aa).

It belongs to the class-II aminoacyl-tRNA synthetase family. Tetramer of two alpha and two beta subunits.

It localises to the cytoplasm. It catalyses the reaction tRNA(Gly) + glycine + ATP = glycyl-tRNA(Gly) + AMP + diphosphate. The protein is Glycine--tRNA ligase beta subunit of Shewanella piezotolerans (strain WP3 / JCM 13877).